Consider the following 188-residue polypeptide: MKVIASSLRKGNVVEKDGRLYVILSAENIHPGKGTPVTQLDMRRITDGVKVSERYRTTEQVERAFVEDREHTFLYSDGEGFHFMNPESYEQVAVPEDVIGDQAAYLQEGMAVMLSLHNGVPLAIELPQRVTLEVTETEPVTKGQTASSSYKPATLSNGVRTQVPPHITAGTRVVIMTADGSYVERAKD.

The interval 139-163 (PVTKGQTASSSYKPATLSNGVRTQV) is disordered. Polar residues predominate over residues 142–160 (KGQTASSSYKPATLSNGVR).

The protein belongs to the elongation factor P family.

The protein localises to the cytoplasm. It participates in protein biosynthesis; polypeptide chain elongation. In terms of biological role, involved in peptide bond synthesis. Stimulates efficient translation and peptide-bond synthesis on native or reconstituted 70S ribosomes in vitro. Probably functions indirectly by altering the affinity of the ribosome for aminoacyl-tRNA, thus increasing their reactivity as acceptors for peptidyl transferase. The protein is Elongation factor P of Methylobacterium nodulans (strain LMG 21967 / CNCM I-2342 / ORS 2060).